A 259-amino-acid polypeptide reads, in one-letter code: Acetylglutamate kinase (259 aa).

Substrate-binding positions include 45 to 46 (GG), Arg67, and Asn159.

It belongs to the acetylglutamate kinase family. ArgB subfamily.

Its subcellular location is the cytoplasm. It carries out the reaction N-acetyl-L-glutamate + ATP = N-acetyl-L-glutamyl 5-phosphate + ADP. It participates in amino-acid biosynthesis; L-arginine biosynthesis; N(2)-acetyl-L-ornithine from L-glutamate: step 2/4. Functionally, catalyzes the ATP-dependent phosphorylation of N-acetyl-L-glutamate. This Aeromonas hydrophila subsp. hydrophila (strain ATCC 7966 / DSM 30187 / BCRC 13018 / CCUG 14551 / JCM 1027 / KCTC 2358 / NCIMB 9240 / NCTC 8049) protein is Acetylglutamate kinase.